The following is a 295-amino-acid chain: UDP-N-acetylenolpyruvoylglucosamine reductase (295 aa).

An FAD-binding PCMH-type domain is found at 25 to 189 (RVGGPADLFA…LEALFRLDQR (165 aa)). Arg169 is a catalytic residue. Ser218 functions as the Proton donor in the catalytic mechanism. The active site involves Glu288.

This sequence belongs to the MurB family. FAD serves as cofactor.

It localises to the cytoplasm. It carries out the reaction UDP-N-acetyl-alpha-D-muramate + NADP(+) = UDP-N-acetyl-3-O-(1-carboxyvinyl)-alpha-D-glucosamine + NADPH + H(+). It participates in cell wall biogenesis; peptidoglycan biosynthesis. In terms of biological role, cell wall formation. In Pelobacter propionicus (strain DSM 2379 / NBRC 103807 / OttBd1), this protein is UDP-N-acetylenolpyruvoylglucosamine reductase.